A 156-amino-acid chain; its full sequence is Lipoprotein signal peptidase (156 aa).

The next 2 helical transmembrane spans lie at 57–77 (LFLI…LFIN) and 83–103 (ILKI…IDRI). Catalysis depends on residues aspartate 110 and aspartate 129. A helical membrane pass occupies residues 124 to 144 (IFNIADVLVSLGTILLIIFII).

The protein belongs to the peptidase A8 family.

The protein resides in the cell membrane. It catalyses the reaction Release of signal peptides from bacterial membrane prolipoproteins. Hydrolyzes -Xaa-Yaa-Zaa-|-(S,diacylglyceryl)Cys-, in which Xaa is hydrophobic (preferably Leu), and Yaa (Ala or Ser) and Zaa (Gly or Ala) have small, neutral side chains.. It participates in protein modification; lipoprotein biosynthesis (signal peptide cleavage). This protein specifically catalyzes the removal of signal peptides from prolipoproteins. The chain is Lipoprotein signal peptidase from Clostridium tetani (strain Massachusetts / E88).